Here is a 386-residue protein sequence, read N- to C-terminus: Putative nickel insertion protein (386 aa).

The protein belongs to the LarC family.

The sequence is that of Putative nickel insertion protein from Dictyoglomus thermophilum (strain ATCC 35947 / DSM 3960 / H-6-12).